We begin with the raw amino-acid sequence, 379 residues long: Heterogeneous nuclear ribonucleoprotein A3 (379 aa).

The residue at position 1 (methionine 1) is an N-acetylmethionine. Residues 1–10 (MEVKPPPGRP) are compositionally biased toward pro residues. A disordered region spans residues 1–34 (MEVKPPPGRPQPDSGRRRRRRGEEGHDPKEPEQL). A Glycyl lysine isopeptide (Lys-Gly) (interchain with G-Cter in SUMO2) cross-link involves residue lysine 4. Phosphoserine is present on serine 14. A compositionally biased stretch (basic and acidic residues) spans 21 to 34 (RGEEGHDPKEPEQL). Residues 35–118 (RKLFIGGLSF…RAVSREDSVK (84 aa)) form the RRM 1 domain. Residue lysine 36 forms a Glycyl lysine isopeptide (Lys-Gly) (interchain with G-Cter in SUMO2) linkage. Serine 43 bears the Phosphoserine mark. Dimethylated arginine; alternate is present on arginine 52. Position 52 is an omega-N-methylarginine; alternate (arginine 52). An Omega-N-methylarginine modification is found at arginine 76. A phosphoserine mark is found at serine 112 and serine 116. A Glycyl lysine isopeptide (Lys-Gly) (interchain with G-Cter in SUMO2) cross-link involves residue lysine 118. A Phosphothreonine modification is found at threonine 124. Residues 126-205 (KKIFVGGIKE…CEVKKALSKQ (80 aa)) enclose the RRM 2 domain. Lysine 134 is subject to N6-acetyllysine; alternate. Residue lysine 134 forms a Glycyl lysine isopeptide (Lys-Gly) (interchain with G-Cter in SUMO2); alternate linkage. Glycyl lysine isopeptide (Lys-Gly) (interchain with G-Cter in SUMO2) cross-links involve residues lysine 151 and lysine 182. The segment at 204–225 (KQEMQSAGSQRGRGGGSGNFMG) is disordered. Omega-N-methylarginine; alternate occurs at positions 214, 216, 226, 239, and 246. Arginine 214, arginine 216, arginine 226, arginine 239, and arginine 246 each carry asymmetric dimethylarginine; alternate. Residues 214 to 225 (RGRGGGSGNFMG) show a composition bias toward gly residues. Arginine 257 carries the post-translational modification Omega-N-methylarginine. Arginine 286 carries the asymmetric dimethylarginine modification. The tract at residues 335-379 (NYSGQQQSNYGPMKGGSFGGRSSGSPYGGGYGSGGGSGGYGSRRF) is disordered. The span at 347 to 379 (MKGGSFGGRSSGSPYGGGYGSGGGSGGYGSRRF) shows a compositional bias: gly residues. Phosphoserine is present on serine 351. An Omega-N-methylarginine modification is found at arginine 355. Phosphoserine is present on serine 359. 2 positions are modified to phosphotyrosine: tyrosine 361 and tyrosine 365. Residues serine 367 and serine 371 each carry the phosphoserine modification. Tyrosine 374 carries the post-translational modification Phosphotyrosine. A Phosphoserine modification is found at serine 376.

As to quaternary structure, identified in the spliceosome C complex.

It is found in the nucleus. Plays a role in cytoplasmic trafficking of RNA. Binds to the cis-acting response element, A2RE. May be involved in pre-mRNA splicing. The protein is Heterogeneous nuclear ribonucleoprotein A3 (Hnrnpa3) of Mus musculus (Mouse).